The following is a 327-amino-acid chain: Fumigatonoid B endoperoxide isomerase nvfE (327 aa).

Positions 1–22 (MGRDQVSHKRSQNSNVSEIPDL) are disordered. Fe cation contacts are provided by His152, Asp154, and His234.

Belongs to the PhyH family. As to quaternary structure, homodimer. Fe cation is required as a cofactor.

It catalyses the reaction fumigatonoid B = fumigatonoid C. It participates in secondary metabolite biosynthesis; terpenoid biosynthesis. In terms of biological role, fumigatonoid B endoperoxide isomerase; part of the gene cluster that mediates the biosynthesis of novofumigatonin, a heavily oxygenated meroterpenoid containing a unique orthoester moiety. The first step of the pathway is the synthesis of 3,5-dimethylorsellinic acid (DMOA) by the polyketide synthase nvfA via condensation of one acetyl-CoA starter unit with 3 malonyl-CoA units and 2 methylations. DMOA is then converted to farnesyl-DMOA by the farnesyltransferase nvfB. Epoxydation by FAD-dependent monooxygenase nvfK, followed by a protonation-initiated cyclization catalyzed by the terpene cyclase nvfL leads to the production of asnavolin H. The short chain dehydrogenase nvfC then as a 3-OH dehydrogenase of asnovolin H to yield chemesin D. There are two branches to synthesize asnovolin A from chemesin D. In one branch, chemesin D undergoes Baeyer-Villiger oxidation by nvfH, methylation by nvfJ, and enoyl reduction by the nvfM D enoylreductase that reduces the double bond between C-5'and C-6', to form respectively asnovolin I, asnovolin K, and asnovolin A. In the other branch, the methylation precedes the Baeyer-Villiger oxidation and the enoyl reduction to yield asnovolin A via the asnovolin J intermediate. Asnovolin A is further converted to fumigatonoid A by the Fe(II)/2-oxoglutarate-dependent dioxygenase nvfI that catalyzes an endoperoxidation reaction. The alpha/beta hydrolase nvfD then acts as an epimerase that converts fumigatonoid A to its C-5' epimer, which then undergoes spontaneous or nvfD-catalyzed lactonization. The following step utilizes the ketoreductase nvfG to produce fumigatonoid B. The dioxygenase nvfE further converts fumigatonoid B into fumigatonoid C. Finally the Fe(II)/2-oxoglutarate-dependent dioxygenase nvfF catalyzes two rounds of oxidation to transform fumigatonoid C into the end product, novofumigatonin A. The chain is Fumigatonoid B endoperoxide isomerase nvfE from Aspergillus novofumigatus (strain IBT 16806).